Reading from the N-terminus, the 352-residue chain is Photosystem II D2 protein (352 aa).

A helical transmembrane segment spans residues 40–60 (CAYLALGGWLTGTTFVTSWYT). His-117 contributes to the chlorophyll a binding site. A helical membrane pass occupies residues 124-140 (GFMLRQFEIARLVGVRP). Pheophytin a-binding residues include Gln-129 and Asn-142. A helical transmembrane segment spans residues 152–165 (VFVSVFLIYPLGQS). Residue His-197 coordinates chlorophyll a. A helical transmembrane segment spans residues 207-227 (GALLCAIHGATVENTLFQDGE). A plastoquinone-binding residues include His-214 and Phe-261. His-214 serves as a coordination point for Fe cation. His-268 provides a ligand contact to Fe cation. The chain crosses the membrane as a helical span at residues 278–294 (GLWMSSIGVVGLALNLR).

This sequence belongs to the reaction center PufL/M/PsbA/D family. As to quaternary structure, PSII is composed of 1 copy each of membrane proteins PsbA, PsbB, PsbC, PsbD, PsbE, PsbF, PsbH, PsbI, PsbJ, PsbK, PsbL, PsbM, PsbT, PsbX, PsbY, PsbZ, Psb30/Ycf12, peripheral proteins PsbO, CyanoQ (PsbQ), PsbU, PsbV and a large number of cofactors. It forms dimeric complexes. Requires The D1/D2 heterodimer binds P680, chlorophylls that are the primary electron donor of PSII, and subsequent electron acceptors. It shares a non-heme iron and each subunit binds pheophytin, quinone, additional chlorophylls, carotenoids and lipids. There is also a Cl(-1) ion associated with D1 and D2, which is required for oxygen evolution. The PSII complex binds additional chlorophylls, carotenoids and specific lipids. as cofactor.

The protein resides in the cellular thylakoid membrane. The enzyme catalyses 2 a plastoquinone + 4 hnu + 2 H2O = 2 a plastoquinol + O2. Photosystem II (PSII) is a light-driven water:plastoquinone oxidoreductase that uses light energy to abstract electrons from H(2)O, generating O(2) and a proton gradient subsequently used for ATP formation. It consists of a core antenna complex that captures photons, and an electron transfer chain that converts photonic excitation into a charge separation. The D1/D2 (PsbA/PsbD) reaction center heterodimer binds P680, the primary electron donor of PSII as well as several subsequent electron acceptors. D2 is needed for assembly of a stable PSII complex. The polypeptide is Photosystem II D2 protein (Synechococcus sp. (strain JA-2-3B'a(2-13)) (Cyanobacteria bacterium Yellowstone B-Prime)).